The sequence spans 396 residues: NAD(P)H oxidoreductase RTN4IP1, mitochondrial (396 aa).

The transit peptide at 1–40 (MGVLKTCVLRRSACAAACFWRRTVIPKPPFRGISTTSARS) directs the protein to the mitochondrion. One can recognise an Enoyl reductase (ER) domain in the interval 52-393 (GKNEVLRFTQ…RGHARGKTVV (342 aa)). The NADPH site is built by serine 214, glycine 216, valine 217, serine 237, tyrosine 255, asparagine 276, leucine 300, alanine 341, phenylalanine 343, histidine 386, alanine 387, and arginine 388.

Belongs to the zinc-containing alcohol dehydrogenase family. Quinone oxidoreductase subfamily. As to quaternary structure, interacts with RTN4, UQCRC1 and UQCRC2. As to expression, widely expressed in mitochondria-enriched tissues. Found in heart, kidney, liver, brain and spinal cord.

The protein resides in the mitochondrion matrix. It is found in the mitochondrion outer membrane. It carries out the reaction a 3-demethylubiquinone + NADH + 2 H(+) = a 3-demethylubiquinol + NAD(+). It catalyses the reaction a 3-demethylubiquinone + NADPH + 2 H(+) = a 3-demethylubiquinol + NADP(+). The enzyme catalyses 3-demethylubiquinone-10 + NADH + 2 H(+) = 3-demethylubiquinol-10 + NAD(+). The catalysed reaction is 3-demethylubiquinone-10 + NADPH + 2 H(+) = 3-demethylubiquinol-10 + NADP(+). The protein operates within cofactor biosynthesis; ubiquinone biosynthesis. Its function is as follows. NAD(P)H oxidoreductase involved in the ubiquinone biosynthetic pathway. Required for the O-methyltransferase activity of COQ3. Able to catalyze the oxidoreduction of 3-demethylubiquinone into 3-demethylubiquinol in vitro. However, it is unclear if 3-demethylubiquinone constitutes a substrate in vivo. May also play a role in the regulation of retinal ganglion cell (RGC) neurite outgrowth, and hence in the development of the inner retina and optic nerve. Appears to be a potent inhibitor of regeneration following spinal cord injury. The sequence is that of NAD(P)H oxidoreductase RTN4IP1, mitochondrial from Mus musculus (Mouse).